A 44-amino-acid chain; its full sequence is Protein PsbN (44 aa).

A helical membrane pass occupies residues F6 to V26.

It belongs to the PsbN family.

It localises to the plastid. It is found in the chloroplast thylakoid membrane. In terms of biological role, may play a role in photosystem I and II biogenesis. The chain is Protein PsbN from Tetradesmus obliquus (Green alga).